Here is a 193-residue protein sequence, read N- to C-terminus: MAGAHVKYRHLSRSSAHRQALLRNLVTSLIKNETIHTTYPKAKEAQRLAEKLITLSKRDTETARRSAQGILYTPDQLLPKLFGEIRERYANRPGGYTRVLRTEPKDQYSQAPSAILELVDGPKDMRFAMTAATVARDREQKTESTDLTKKNMDKVTRFRKDGMRAFEDMVASLRDMKFTAGAINPKEWKKLDR.

The protein belongs to the bacterial ribosomal protein bL17 family. As to quaternary structure, component of the mitochondrial large ribosomal subunit (mt-LSU). Mature N.crassa 74S mitochondrial ribosomes consist of a small (37S) and a large (54S) subunit. The 37S small subunit contains a 16S ribosomal RNA (16S mt-rRNA) and 32 different proteins. The 54S large subunit contains a 23S rRNA (23S mt-rRNA) and 42 different proteins.

The protein resides in the mitochondrion. Its function is as follows. Component of the mitochondrial ribosome (mitoribosome), a dedicated translation machinery responsible for the synthesis of mitochondrial genome-encoded proteins, including at least some of the essential transmembrane subunits of the mitochondrial respiratory chain. The mitoribosomes are attached to the mitochondrial inner membrane and translation products are cotranslationally integrated into the membrane. This chain is Large ribosomal subunit protein bL17m (mrpl8), found in Neurospora crassa (strain ATCC 24698 / 74-OR23-1A / CBS 708.71 / DSM 1257 / FGSC 987).